Reading from the N-terminus, the 140-residue chain is Lysozyme D (140 aa).

The first 18 residues, M1–G18, serve as a signal peptide directing secretion. Positions R19 to F140 constitute a C-type lysozyme domain. Cystine bridges form between C24-C139, C45-C129, C80-C96, and C92-C110. Active-site residues include E50 and D68.

This sequence belongs to the glycosyl hydrolase 22 family. In terms of tissue distribution, found in the midgut.

The catalysed reaction is Hydrolysis of (1-&gt;4)-beta-linkages between N-acetylmuramic acid and N-acetyl-D-glucosamine residues in a peptidoglycan and between N-acetyl-D-glucosamine residues in chitodextrins.. Functionally, unlikely to play an active role in the humoral immune defense. May have a function in the digestion of bacteria in the food. This is Lysozyme D (LysD) from Drosophila melanogaster (Fruit fly).